Here is a 3902-residue protein sequence, read N- to C-terminus: Mediator of RNA polymerase II transcription subunit 12 (3902 aa).

Disordered regions lie at residues 414-576 (ESLT…EELP), 619-674 (FEPF…NPKL), 694-940 (AFDP…LEAL), 977-1029 (VVEK…PEPP), 1812-1831 (TSHK…TETR), 2463-2675 (TVEP…NRKQ), 2719-2771 (AGAS…SSSM), 2876-3151 (RIME…PEMQ), 3195-3549 (LQAG…SSNQ), and 3563-3902 (AGLN…QQQY). Positions 420–430 (EPEEDPEEGPE) are enriched in acidic residues. Positions 709 to 721 (PTPPEAPPPPPPV) are enriched in pro residues. 4 stretches are compositionally biased toward basic and acidic residues: residues 740 to 802 (EDGK…EHLN), 912 to 928 (KAGD…KKPD), 977 to 1004 (VVEK…EKLP), and 1018 to 1027 (KTPEKPKTPE). A compositionally biased stretch (basic residues) spans 1812–1824 (TSHKTKDVKRKSA). A required for nuclear localization region spans residues 2409-3902 (QTTRLDKVAK…MGQFPNQQQY (1494 aa)). Basic and acidic residues predominate over residues 2474–2547 (AAVKKPEEET…VTAKDTEKDT (74 aa)). Residues 2480–2526 (EEETAEKKKDEAKKADEKTTKADDEKKKDETADAKKDNEKQKEEKDK) are a coiled coil. Low complexity-rich tracts occupy residues 2548–2566 (AAPT…AAPD), 2614–2632 (SRAN…SSTT), and 2734–2748 (PHPG…QHQG). A compositionally biased stretch (basic and acidic residues) spans 2876 to 2979 (RIMEEQRILR…ERLERERVAR (104 aa)). Composition is skewed to low complexity over residues 2980 to 3001 (EALA…QAQQ), 3010 to 3143 (QQQR…QRNP), 3196 to 3205 (QAGQAAGQQQ), and 3226 to 3236 (PQQQQQQPQQP). Residues 3237-3248 (GTSQIPNTTPTR) are compositionally biased toward polar residues. Low complexity-rich tracts occupy residues 3250–3275 (ANPM…GQPG), 3284–3295 (GQQQQNQFQRQG), and 3317–3389 (GQQQ…FGRQ). Residues 3391–3409 (APNQENFQQQPGFNQNAAG) are compositionally biased toward polar residues. Low complexity-rich tracts occupy residues 3410–3446 (QNYQ…QQQN), 3454–3539 (QSQQ…QGNQ), and 3570–3619 (SSGN…RPGM). The span at 3620–3649 (GQQGMGQQGMGQQGGMGQSGRGQPGMGGQS) shows a compositional bias: gly residues. 3 stretches are compositionally biased toward low complexity: residues 3663–3700 (MGQP…QQQH), 3710–3742 (QQGR…QQAQ), and 3760–3830 (QQQQ…HRGQ). Positions 3831 to 3841 (GQQGHGMGGAG) are enriched in gly residues. Positions 3842-3888 (QQHQQVPQQQQNQYFQPQQQQDQRMQQQPGGQQQQQQGQSGQQQNNQ) are enriched in low complexity. The segment covering 3889–3902 (HYNNMGQFPNQQQY) has biased composition (polar residues).

The protein belongs to the Mediator complex subunit 12 family. Component of the Mediator complex.

The protein resides in the nucleus. Component of the Mediator complex, a coactivator involved in regulated gene transcription of nearly all RNA polymerase II-dependent genes. Mediator functions as a bridge to convey information from gene-specific regulatory proteins to the basal RNA polymerase II transcription machinery. Mediator is recruited to promoters by direct interactions with regulatory proteins and serves as a scaffold for the assembly of a functional preinitiation complex with RNA polymerase II and the general transcription factors. The sequence is that of Mediator of RNA polymerase II transcription subunit 12 (dpy-22) from Caenorhabditis briggsae.